Consider the following 1915-residue polypeptide: MEDGKRERWPTLMERLCSDGFAFPQYPIKPYHLKRIHRAVLHGNLEKLKYLLLTYYDANKRDRKERTALHLACATGQPEMVHLLVSRRCELNLCDREDRTPLIKAVQLRQEACATLLLQNGANPNITDFFGRTALHYAVYNEDTSMIEKLLSHGTNIEECSKCEYQPLLFAVSRRKVKMVEFLLKKKANVNAIDYLGRSALIHAVTLGEKDIVILLLQHNIDVLSRDAFRKIAGDYAIEAKNRVIFDLIYEYERKRYEDLPINSNPVSSQKQPALKATSGKEDSISNIATEIKDGQKSGTVSSQKQPALKDTSDKDDSVSNTATEIKDEQKSGTVLPAVEQCLNRSLYRPDAVAQPVTENEFSLESEIISKLYIPKRKIISPRSIKDVLPPVEEAVDRCLYLLDRFAQPVTKDKFALESENISEPYFTNRRTISQQSAENLDAACGIDKTENGNMFEDQNVDKEGKALPATGQKANVSPEQPPLFTHTVKDRDHISTRFLGGMDSLTSSEESSERPPLSTLTLKEADPSSKAAMRRKDSPPPGKVSSQKQPAEKATSDDKDSVSNIATEIKEGPISGTVSSQKQPAEKATSDEKDSVSNIATEIKKGQQSGTVSPQKQSAWKVIFKKKVSLLNIATRIMGGGKSGTVSSQKQPASKATSDKTDSALNIATEIKDGLQCGTVSSQKQPALKATTDEEDSVSNIATEIKDGEKSGTVSSQKQPALKATTDEEDSVSNIATEIKDGEKSGTVSSQKQPALKATTDEKDSVSNIATEIKDGEKSGTVSSQKPPALTATSDEEGSVLSIARENKDGEKSRTVSSRKKPALKATSDEKDSFSNITRGKKDGEISRKVSSQKPPTLKGTSDEEDSVLGIARENKDGEKSRTVSSEKPPGLKASSAEKDSVLNIARGKKDGEKTKRVSSRKKPSLEATSDEKDSFSNITREKKDGEISRKVSSQKPPALKGTSDEEDSVLGIARENKDGEKSRTVSSEKPPGLKATSDEKDSVLNIARGKKDGEKTRTVSSQKPPTLKATSDEEDSVLSIARENKDGEKSRTVSSEKPSGLKATSAEKDSVLNIARGKKYGEKTKRVSSRKKPALKATSDEKDSVLYIAREKKDGEKSRTVSSPKQPALKAICDKEDSVPNMATEKKDEQISGTVSCQKQPALKATSDKKDSVSNIPTEIKDGQQSGTVSSQKQPAWKATSVKKDSVSNIATEIKDGQIRGTVSPQKQSAQKVIFKKKVSLLNIATRITGGWKSGTEYPENLPTLKATIENKNSVLNTATKMKDVQTSTPAEQDLEMASEGEQKRLEEYENNQPQVKNQIHSRDDLDDIIQSSQTVSEDGDSLCCNCKNVILLIDQHEMKCKDCVHLLKIKNTFCLWKRLIKLKDNHCEQLRVKIRKLKNKASVLQKRISEKEEIKSQLKHEILELEKELCSLRFAIQQEKKKRRNVEEVHQKVREKLRITEEQYRIEADVTKPIKPALKSAEVELKTGGNNSNQVSETDEKEDLLHENRLMQDEIARLRLEKDTIKNQNLEKKYLKDFEIVKRKHEDLQKALKRNGETLAKTIACYSGQLAALTDENTTLRSKLEKQRESRQRLETEMQSYHCRLNAARCDHDQSHSSKRDQELAFQGTVDKCRHLQENLNSHVLILSLQLSKAESKSRVLKTELHYTGEALKEKALVFEHVQSELKQKQSQMKDIEKMYKSGYNTMEKCIEKQERFCQLKKQNMLLQQQLDDARNKADNQEKAILNIQARCDARVQNLQAECRKHRLLLEEDNKMLVNELNHSKEKECQYEKEKAEREVAVRQLQQKRDDVLNKGSATKALLDASSRHCTYLENGMQDSRKKLDQMRSQFQEIQDQLTATIRCTKEMEGDTQKLEVEHVMMRKIIKKQDDQIERLEKILQHSSLMLQVFES.

6 ANK repeats span residues 31–60 (YHLK…DANK), 64–93 (KERT…ELNL), 97–126 (EDRT…NPNI), 130–159 (FGRT…NIEE), 163–192 (CEYQ…NVNA), and 196–225 (LGRS…DVLS). Disordered stretches follow at residues 261 to 331 (PINS…DEQK), 470 to 619 (ATGQ…QKQS), 639 to 663 (MGGG…DKTD), 676 to 1203 (LQCG…KATS), and 1285 to 1304 (KDVQ…SEGE). Composition is skewed to polar residues over residues 262–272 (INSNPVSSQKQ) and 297–306 (KSGTVSSQKQ). Positions 505-521 (SLTSSEESSERPPLSTL) are enriched in low complexity. 2 stretches are compositionally biased toward basic and acidic residues: residues 551-562 (PAEKATSDDKDS) and 585-596 (PAEKATSDEKDS). Polar residues-rich tracts occupy residues 597–619 (VSNI…QKQS) and 645–657 (GTVS…ASKA). 7 stretches are compositionally biased toward basic and acidic residues: residues 806-815 (RENKDGEKSR), 874-883 (RENKDGEKSR), 931-951 (SDEK…EISR), 976-985 (RENKDGEKSR), 1044-1053 (RENKDGEKSR), 1100-1121 (TSDE…EKSR), and 1134-1152 (ICDK…KDEQ). Residues 1175 to 1196 (VSNIPTEIKDGQQSGTVSSQKQ) are compositionally biased toward polar residues. Coiled-coil stretches lie at residues 1383–1466 (IKLK…TEEQ), 1504–1531 (KEDL…IKNQ), 1573–1614 (LAAL…ARCD), and 1727–1814 (NMLL…KRDD). The tract at residues 1489–1508 (KTGGNNSNQVSETDEKEDLL) is disordered.

Belongs to the ANKRD36 family.

The polypeptide is Ankyrin repeat domain-containing protein 36A (ANKRD36) (Homo sapiens (Human)).